The primary structure comprises 144 residues: MKTFSAKGNEVKRDWFVVDASEKVLGRLATEIARRLRGKHKAEYTPHVDTGDYIIVTNAEKVVVTGRKFKNKMYHHHTGFPGGIKSASFEKLQDKNPTKIIELAVKGMLPKNPLGREMYRKLKVYAGSEHPHTAQQPKQLEIEE.

Belongs to the universal ribosomal protein uL13 family. In terms of assembly, part of the 50S ribosomal subunit.

This protein is one of the early assembly proteins of the 50S ribosomal subunit, although it is not seen to bind rRNA by itself. It is important during the early stages of 50S assembly. The protein is Large ribosomal subunit protein uL13 of Legionella pneumophila (strain Paris).